The following is a 308-amino-acid chain: tRNA dimethylallyltransferase (308 aa).

9-16 (GPTAVGKT) serves as a coordination point for ATP. Residue 11-16 (TAVGKT) participates in substrate binding. The interval 34–37 (DSMQ) is interaction with substrate tRNA.

This sequence belongs to the IPP transferase family. In terms of assembly, monomer. The cofactor is Mg(2+).

It catalyses the reaction adenosine(37) in tRNA + dimethylallyl diphosphate = N(6)-dimethylallyladenosine(37) in tRNA + diphosphate. In terms of biological role, catalyzes the transfer of a dimethylallyl group onto the adenine at position 37 in tRNAs that read codons beginning with uridine, leading to the formation of N6-(dimethylallyl)adenosine (i(6)A). In Lactobacillus delbrueckii subsp. bulgaricus (strain ATCC 11842 / DSM 20081 / BCRC 10696 / JCM 1002 / NBRC 13953 / NCIMB 11778 / NCTC 12712 / WDCM 00102 / Lb 14), this protein is tRNA dimethylallyltransferase.